The sequence spans 54 residues: Rubredoxin (54 aa).

N-formylmethionine is present on Met1. The Rubredoxin-like domain occupies 1–54 (MKKYTCTVCGYIYNPEDGDPDNGVNPGTDFKDIPDDWVCPLCGVGKDQFEEVEE). Fe cation contacts are provided by Cys6, Cys9, Cys39, and Cys42.

It belongs to the rubredoxin family. Fe(3+) is required as a cofactor.

Functionally, rubredoxin is a small nonheme, iron protein lacking acid-labile sulfide. Its single Fe, chelated to 4 Cys, functions as an electron acceptor and may also stabilize the conformation of the molecule. The polypeptide is Rubredoxin (Clostridium pasteurianum).